The primary structure comprises 308 residues: Glutaminase (308 aa).

Serine 66, asparagine 117, glutamate 161, asparagine 168, tyrosine 192, tyrosine 244, and valine 262 together coordinate substrate.

It belongs to the glutaminase family. In terms of assembly, homotetramer.

It catalyses the reaction L-glutamine + H2O = L-glutamate + NH4(+). This is Glutaminase from Klebsiella pneumoniae subsp. pneumoniae (strain ATCC 700721 / MGH 78578).